A 326-amino-acid polypeptide reads, in one-letter code: tRNA uridine(34) hydroxylase (326 aa).

In terms of domain architecture, Rhodanese spans 123 to 217; that stretch reads ADPEVFVVDT…YLEEVPQEES (95 aa). C177 acts as the Cysteine persulfide intermediate in catalysis. Residues 278 to 288 show a composition bias toward basic and acidic residues; that stretch reads QVERFREREKQ. The segment at 278-326 is disordered; the sequence is QVERFREREKQVSLANQRGEQHVGGESAKQRAQRREAKLAKKAAQRKQA. Residues 317-326 are compositionally biased toward basic residues; that stretch reads AKKAAQRKQA.

This sequence belongs to the TrhO family.

The enzyme catalyses uridine(34) in tRNA + AH2 + O2 = 5-hydroxyuridine(34) in tRNA + A + H2O. Catalyzes oxygen-dependent 5-hydroxyuridine (ho5U) modification at position 34 in tRNAs. The polypeptide is tRNA uridine(34) hydroxylase (Vibrio parahaemolyticus serotype O3:K6 (strain RIMD 2210633)).